The chain runs to 230 residues: Urease accessory protein UreF (230 aa).

This sequence belongs to the UreF family. UreD, UreF and UreG form a complex that acts as a GTP-hydrolysis-dependent molecular chaperone, activating the urease apoprotein by helping to assemble the nickel containing metallocenter of UreC. The UreE protein probably delivers the nickel.

The protein resides in the cytoplasm. In terms of biological role, required for maturation of urease via the functional incorporation of the urease nickel metallocenter. This Chromohalobacter salexigens (strain ATCC BAA-138 / DSM 3043 / CIP 106854 / NCIMB 13768 / 1H11) protein is Urease accessory protein UreF.